We begin with the raw amino-acid sequence, 687 residues long: DNA ligase (687 aa).

NAD(+) is bound by residues 34–38 (DAEYD), 83–84 (SL), and E117. Catalysis depends on K119, which acts as the N6-AMP-lysine intermediate. Residues R140, E182, K298, and K322 each coordinate NAD(+). Positions 416, 419, 434, and 439 each coordinate Zn(2+). Residues 609-687 (EARGPFAGKT…EEEFVRLLKE (79 aa)) form the BRCT domain.

This sequence belongs to the NAD-dependent DNA ligase family. LigA subfamily. It depends on Mg(2+) as a cofactor. The cofactor is Mn(2+).

The enzyme catalyses NAD(+) + (deoxyribonucleotide)n-3'-hydroxyl + 5'-phospho-(deoxyribonucleotide)m = (deoxyribonucleotide)n+m + AMP + beta-nicotinamide D-nucleotide.. Its function is as follows. DNA ligase that catalyzes the formation of phosphodiester linkages between 5'-phosphoryl and 3'-hydroxyl groups in double-stranded DNA using NAD as a coenzyme and as the energy source for the reaction. It is essential for DNA replication and repair of damaged DNA. The sequence is that of DNA ligase from Anaeromyxobacter dehalogenans (strain 2CP-C).